A 497-amino-acid polypeptide reads, in one-letter code: MSSVLNPSSPHSWDLCCSSSSNRSYHRPTHPIVGLLVGQLSVVLLIGAFIKFFIFGEAPPSPSRSQTHRTSQHKRSYSIHGARDLSPRTLKEKPSSNVLRPVPSSSTNTRSILRKTYYSANPTNFPSKHGRHRPHHSTHQPESLDWFNVLIAQTIAQYRQTAYILKDSPTASILESLATTLNNPEKKPSFIDEITVTDISLGEEFPIFSNCRVIAIDDPNSDGGRLQALMDVDLSDDNLSLAIETNLVLNYPKPYSAILPVALSVSVVRFSGTLCISFVPGTTESSTNLTPTSSNIDTNLRSNELRGKTAPQESSTTDEGSQGGATSTTGIPKTSLAFSFLPDYRLDLSVRSLIGSRSRLQDVPKVAQLVEARVHAWFEERVVEPRVQVVALPGIWPRMGRTGVRGQEEQPDVSSSDAAGVSGAKVSMLGSRDTGAEMLHAAREVDAEGLRYRRNPPPGDKGSSSKYAQQNQSSRERGRADDPFRIPGSLPDAVPIT.

The Lumenal portion of the chain corresponds to 1 to 28; the sequence is MSSVLNPSSPHSWDLCCSSSSNRSYHRP. The chain crosses the membrane as a helical span at residues 29 to 55; sequence THPIVGLLVGQLSVVLLIGAFIKFFIF. Residues 56-497 lie on the Cytoplasmic side of the membrane; the sequence is GEAPPSPSRS…GSLPDAVPIT (442 aa). 4 disordered regions span residues 60–107, 284–330, 402–421, and 437–497; these read PSPS…SSST, ESST…STTG, TGVR…AAGV, and EMLH…VPIT. Basic residues predominate over residues 66-77; sequence QTHRTSQHKRSY. Residues 81 to 94 are compositionally biased toward basic and acidic residues; sequence GARDLSPRTLKEKP. Polar residues-rich tracts occupy residues 95–107, 284–302, and 311–330; these read SSNV…SSST, ESST…NLRS, and PQES…STTG. Residues 140–393 form the SMP-LTD domain; sequence QPESLDWFNV…EPRVQVVALP (254 aa). Residues 412–421 show a composition bias toward low complexity; that stretch reads DVSSSDAAGV. Over residues 440-451 the composition is skewed to basic and acidic residues; sequence HAAREVDAEGLR. Residues 462-473 are compositionally biased toward polar residues; the sequence is GSSSKYAQQNQS. Positions 474 to 484 are enriched in basic and acidic residues; the sequence is SRERGRADDPF.

It belongs to the MMM1 family. Homodimer. Component of the ER-mitochondria encounter structure (ERMES) or MDM complex, composed of MMM1, MDM10, MDM12 and MDM34. An MMM1 homodimer associates with one molecule of MDM12 on each side in a pairwise head-to-tail manner, and the SMP-LTD domains of MMM1 and MDM12 generate a continuous hydrophobic tunnel for phospholipid trafficking.

It localises to the endoplasmic reticulum membrane. Component of the ERMES/MDM complex, which serves as a molecular tether to connect the endoplasmic reticulum (ER) and mitochondria. Components of this complex are involved in the control of mitochondrial shape and protein biogenesis, and function in nonvesicular lipid trafficking between the ER and mitochondria. The MDM12-MMM1 subcomplex functions in the major beta-barrel assembly pathway that is responsible for biogenesis of all outer membrane beta-barrel proteins, and acts in a late step after the SAM complex. The MDM10-MDM12-MMM1 subcomplex further acts in the TOM40-specific pathway after the action of the MDM12-MMM1 complex. Essential for establishing and maintaining the structure of mitochondria and maintenance of mtDNA nucleoids. The polypeptide is Maintenance of mitochondrial morphology protein 1 (Uncinocarpus reesii (strain UAMH 1704)).